The primary structure comprises 443 residues: Phosphoribosylamine--glycine ligase (443 aa).

The 216-residue stretch at arginine 109–asparagine 324 folds into the ATP-grasp domain. Methionine 140–threonine 202 serves as a coordination point for ATP. 3 residues coordinate Mg(2+): glutamine 282, glutamate 294, and asparagine 296. Residues glutamine 282, glutamate 294, and asparagine 296 each contribute to the Mn(2+) site.

It belongs to the GARS family. Mg(2+) serves as cofactor. Mn(2+) is required as a cofactor.

The catalysed reaction is 5-phospho-beta-D-ribosylamine + glycine + ATP = N(1)-(5-phospho-beta-D-ribosyl)glycinamide + ADP + phosphate + H(+). It functions in the pathway purine metabolism; IMP biosynthesis via de novo pathway; N(1)-(5-phospho-D-ribosyl)glycinamide from 5-phospho-alpha-D-ribose 1-diphosphate: step 2/2. The polypeptide is Phosphoribosylamine--glycine ligase (Methanococcus vannielii (strain ATCC 35089 / DSM 1224 / JCM 13029 / OCM 148 / SB)).